Reading from the N-terminus, the 180-residue chain is Large ribosomal subunit protein uL5 (180 aa).

Belongs to the universal ribosomal protein uL5 family. Part of the 50S ribosomal subunit; part of the 5S rRNA/L5/L18/L25 subcomplex. Contacts the 5S rRNA and the P site tRNA. Forms a bridge to the 30S subunit in the 70S ribosome.

In terms of biological role, this is one of the proteins that bind and probably mediate the attachment of the 5S RNA into the large ribosomal subunit, where it forms part of the central protuberance. In the 70S ribosome it contacts protein S13 of the 30S subunit (bridge B1b), connecting the 2 subunits; this bridge is implicated in subunit movement. Contacts the P site tRNA; the 5S rRNA and some of its associated proteins might help stabilize positioning of ribosome-bound tRNAs. This Moorella thermoacetica (strain ATCC 39073 / JCM 9320) protein is Large ribosomal subunit protein uL5.